Consider the following 1153-residue polypeptide: MSQEPTTYSLFLFLFLSHGVSSYTVPNSRQDLHPLLQNMAEEIIDGSYLNALLDLIQFQSSHVWTDDLSHRVLAYLNSRNVAFTIPSLQAAVENHLEQRLHQPQKLLEDLRKTDAQQFRTAMKCLLEDKKDGLDLKDIIIDLGEIRERALQSPGVNRSLFLITLERCFQMLNSLECVEILGKVLRGSSGSFLQPDITERLPRDLREDAFKNLSAVFKDLYDKTSAHSQRALYSWMTGILQTSSNATDDSASWVSAEHLWVLGRYMVHLSFEEITKISPIEIGLFISYDNATKQLDMVYDITPELAQAFLERISSSNFNMRNTSTIHRQAHELWALEPFPKMLGLLVCFYNDLELLDATVAQVLLYQMIKCSHLRGFQAGVQKLKAELLDIAMENQTLNETLGSLSDAVVGLTYSQLESLSPEAVHGAISTLNQVSGWAKSQVIILSAKYLAHEKVLSFYNVSQMGALLAGVSTQAFCSMKRKDISQVLRSAVSQYVSDLSPAQQQGILSKMVQAEDTAPGIVEIQGAFFKEVSLFDLRRQPGFNSTVLKDKELGRSQALFLYELLLKTTRRPEELLSAGQLVKGVTCSHIDAMSTDFFLAHFQDFQNNFALLSPYQVNCLAWKYWEVSRLSMPPFLLAALPARYLASVPASQCVPFLISLGKSWLDSLVLDSHKKTSVLRKVQQCLDDSIADEYTVDIMGNLLCHLPAAIIDRGISPRAWATALHGLRDCPDLNPEQKAAVRLKLLGQYGLPQHWTAETTKDLGPFLVLFSGDELSSIATKFPEILLQAASKMARTLPTKEFLWAVFQSVRNSSDKIPSYDPMPGCHGVVAPSSDDIFKLAEANACWALEDLRCMEEDTFIRTVELLGAVQGFSRPQLMTLKEKAIQVWDMPSYWREHHIVSLGRIALALNESELEQLDLSSIDTVASLSWQTEWTPGQAESILQGYLDDSGYSIQDLKSFHLVGLGATLCAINITEIPLIKISEFRVVVARIGTLLCSTHVLAEFKRKAEVVFGDPTEWTSSVLQELGTIAAGLTKAELRMLDKDLMPYFQPSAIKCLPDEIFKELSAEQIASLGPENAAAVTHAQRRRLSPLQLQSLQQALDGAKTHSWQDAPASAGPTRTSSSRSPAGALQSWGLWLGCPLLVLMAKLLW.

An N-terminal signal peptide occupies residues 1 to 22 (MSQEPTTYSLFLFLFLSHGVSS). Asparagine 156 is a glycosylation site (N-linked (GlcNAc...) asparagine). A glycan (N-linked (GlcNAc...) (complex) asparagine) is linked at asparagine 211. Asparagine 244, asparagine 289, asparagine 321, asparagine 394, asparagine 398, asparagine 460, asparagine 544, asparagine 812, asparagine 911, and asparagine 974 each carry an N-linked (GlcNAc...) asparagine glycan. Positions 1109-1128 (HSWQDAPASAGPTRTSSSRS) are disordered. A lipid anchor (GPI-anchor amidated alanine) is attached at alanine 1130. Positions 1131–1153 (GALQSWGLWLGCPLLVLMAKLLW) are cleaved as a propeptide — removed in mature form.

It belongs to the stereocilin family.

It localises to the apical cell membrane. The protein localises to the secreted. It is found in the extracellular space. Its subcellular location is the extracellular matrix. In terms of biological role, may act as an adhesion molecule. The polypeptide is Otoancorin (OTOA) (Homo sapiens (Human)).